Consider the following 298-residue polypeptide: Small ribosomal subunit biogenesis GTPase RsgA 1 (298 aa).

Residues 63 to 224 (QTQLVRPPVA…VADTPGFSSY (162 aa)) form the CP-type G domain. GTP contacts are provided by residues 112–115 (AKTD) and 167–175 (GQTGAGKST). Residues cysteine 248, cysteine 253, histidine 255, and cysteine 261 each contribute to the Zn(2+) site.

This sequence belongs to the TRAFAC class YlqF/YawG GTPase family. RsgA subfamily. In terms of assembly, monomer. Associates with 30S ribosomal subunit, binds 16S rRNA. Zn(2+) serves as cofactor.

The protein localises to the cytoplasm. One of several proteins that assist in the late maturation steps of the functional core of the 30S ribosomal subunit. Helps release RbfA from mature subunits. May play a role in the assembly of ribosomal proteins into the subunit. Circularly permuted GTPase that catalyzes slow GTP hydrolysis, GTPase activity is stimulated by the 30S ribosomal subunit. The chain is Small ribosomal subunit biogenesis GTPase RsgA 1 from Lactiplantibacillus plantarum (strain ATCC BAA-793 / NCIMB 8826 / WCFS1) (Lactobacillus plantarum).